The primary structure comprises 477 residues: Zinc finger C3HC-type protein 1-like (477 aa).

The C3HC-type zinc finger occupies 95–149; the sequence is CAKYGWCNIECDMLKCSSCNAYLCASLQPILDFSKYKQRCVELQEALRKAHEKFC. Positions 287 to 392 are disordered; sequence SLSAPGTPVS…SSSSDTSPRS (106 aa). Residues 354–363 show a composition bias toward polar residues; the sequence is SMGQGENTGL. Positions 370–379 are enriched in basic residues; the sequence is SPHRRAKRPR. Low complexity predominate over residues 382-392; that stretch reads SSSSSDTSPRS.

Post-translationally, phosphorylated. May also be weakly phosphorylated on Tyr residues.

It is found in the nucleus. It localises to the nucleus envelope. Required for proper positioning of a substantial amount of TPR at the nuclear basket (NB) through interaction with TPR. In Xenopus laevis (African clawed frog), this protein is Zinc finger C3HC-type protein 1-like (zc3hc1).